Reading from the N-terminus, the 317-residue chain is Melanocyte-stimulating hormone receptor (317 aa).

Topologically, residues 1 to 37 are extracellular; it reads MPMQGAQRRLLGSLNSTPTATPNLGLAANHTGAPCLE. Asparagine 29 carries an N-linked (GlcNAc...) asparagine glycan. Residues 38–63 form a helical membrane-spanning segment; sequence VSIPDGLFLSLGLVSLVENVLVVAAI. Topologically, residues 64 to 72 are cytoplasmic; that stretch reads AKNRNLHSP. Residues 73–93 traverse the membrane as a helical segment; it reads MYCFICCLALSDLLVSGSNML. Topologically, residues 94-118 are extracellular; sequence ETAVILLLEAGALATRASVVQQLQN. The helical transmembrane segment at 119–140 threads the bilayer; sequence TIDVLTCSSMLCSLCFLGAIAV. Residues 141-163 lie on the Cytoplasmic side of the membrane; that stretch reads DRYVSIFYALRYHSIVTLPRARR. Residues 164–183 traverse the membrane as a helical segment; that stretch reads AIAAIWVASVLSSTLFIAYC. At 184-191 the chain is on the extracellular side; it reads DHAAVLLC. The chain crosses the membrane as a helical span at residues 192–211; it reads LVVFFLAMLVLMAVLYVHML. At 212–240 the chain is on the cytoplasmic side; that stretch reads ARACQHAQGITRLHKRQLPAHQGFGLRGA. Residues 241–266 form a helical membrane-spanning segment; that stretch reads ATLTILLGIFFLCWGPFFLHLMLVVL. Over 267-279 the chain is Extracellular; that stretch reads CPQHLTCSCIFKN. The chain crosses the membrane as a helical span at residues 280 to 300; sequence FKVFLTLIICNTIIDPLIYAF. The Cytoplasmic segment spans residues 301–317; that stretch reads RSQELCRTLKEVLLCSW. Cysteine 315 carries S-palmitoyl cysteine lipidation.

It belongs to the G-protein coupled receptor 1 family. Interacts with MGRN1, but does not undergo MGRN1-mediated ubiquitination; this interaction competes with GNAS-binding and thus inhibits agonist-induced cAMP production. Interacts with OPN3; the interaction results in a decrease in MC1R-mediated cAMP signaling and ultimately a decrease in melanin production in melanocytes.

It is found in the cell membrane. Receptor for MSH (alpha, beta and gamma) and ACTH. The activity of this receptor is mediated by G proteins which activate adenylate cyclase. Mediates melanogenesis, the production of eumelanin (black/brown) and phaeomelanin (red/yellow), via regulation of cAMP signaling in melanocytes. This is Melanocyte-stimulating hormone receptor (MC1R) from Alouatta palliata (Mantled howler monkey).